A 113-amino-acid chain; its full sequence is Nucleoid-associated protein sync_0026 (113 aa).

It belongs to the YbaB/EbfC family. As to quaternary structure, homodimer.

Its subcellular location is the cytoplasm. The protein localises to the nucleoid. Binds to DNA and alters its conformation. May be involved in regulation of gene expression, nucleoid organization and DNA protection. The polypeptide is Nucleoid-associated protein sync_0026 (Synechococcus sp. (strain CC9311)).